The chain runs to 101 residues: Protein Tat (101 aa).

Positions 1-24 are interaction with human CREBBP; sequence MEPVDPNLEPWNHPGSQPKTACNN. The transactivation stretch occupies residues 1 to 48; the sequence is MEPVDPNLEPWNHPGSQPKTACNNCYCKRCSYHCLVCFQTKGLGISYG. 3 residues coordinate Zn(2+): C22, C25, and C27. The segment at 22–37 is cysteine-rich; it reads CNNCYCKRCSYHCLVC. K28 bears the N6-acetyllysine; by host PCAF mark. 4 residues coordinate Zn(2+): C30, H33, C34, and C37. The core stretch occupies residues 38–48; sequence FQTKGLGISYG. The disordered stretch occupies residues 47–101; it reads YGRKKRRQRRSAPPSSEDHQNPIPKQPLPQTRGDQTGSEESKKKVESKTETDPFD. The Nuclear localization signal, RNA-binding (TAR), and protein transduction signature appears at 49-57; it reads RKKRRQRRS. Residues 49-86 are interaction with the host capping enzyme RNGTT; sequence RKKRRQRRSAPPSSEDHQNPIPKQPLPQTRGDQTGSEE. Residues K50 and K51 each carry the N6-acetyllysine; by host EP300 and GCN5L2 modification. An asymmetric dimethylarginine; by host PRMT6 mark is found at R52 and R53. A Glycyl lysine isopeptide (Lys-Gly) (interchain with G-Cter in ubiquitin) cross-link involves residue K71. The Cell attachment site signature appears at 78-80; sequence RGD. Over residues 85-101 the composition is skewed to basic and acidic residues; that stretch reads EESKKKVESKTETDPFD.

It belongs to the lentiviruses Tat family. In terms of assembly, interacts with host CCNT1. Associates with the P-TEFb complex composed at least of Tat, P-TEFb (CDK9 and CCNT1), TAR RNA, RNA Pol II. Recruits the HATs CREBBP, TAF1/TFIID, EP300, PCAF and GCN5L2. Interacts with host KAT5/Tip60; this interaction targets the latter to degradation. Interacts with the host deacetylase SIRT1. Interacts with host capping enzyme RNGTT; this interaction stimulates RNGTT. Binds to host KDR, and to the host integrins ITGAV/ITGB3 and ITGA5/ITGB1. Interacts with host KPNB1/importin beta-1 without previous binding to KPNA1/importin alpha-1. Interacts with EIF2AK2. Interacts with host nucleosome assembly protein NAP1L1; this interaction may be required for the transport of Tat within the nucleus, since the two proteins interact at the nuclear rim. Interacts with host C1QBP/SF2P32; this interaction involves lysine-acetylated Tat. Interacts with the host chemokine receptors CCR2, CCR3 and CXCR4. Interacts with host DPP4/CD26; this interaction may trigger an anti-proliferative effect. Interacts with host LDLR. Interacts with the host extracellular matrix metalloproteinase MMP1. Interacts with host PRMT6; this interaction mediates Tat's methylation. Interacts with, and is ubiquitinated by MDM2/Hdm2. Interacts with host PSMC3 and HTATIP2. Interacts with STAB1; this interaction may overcome SATB1-mediated repression of IL2 and IL2RA (interleukin) in T cells by binding to the same domain than HDAC1. Interacts (when acetylated) with human CDK13, thereby increasing HIV-1 mRNA splicing and promoting the production of the doubly spliced HIV-1 protein Nef. Interacts with host TBP; this interaction modulates the activity of transcriptional pre-initiation complex. Interacts with host RELA. Interacts with host PLSCR1; this interaction negatively regulates Tat transactivation activity by altering its subcellular distribution. In terms of processing, asymmetrical arginine methylation by host PRMT6 seems to diminish the transactivation capacity of Tat and affects the interaction with host CCNT1. Acetylation by EP300, CREBBP, GCN5L2/GCN5 and PCAF regulates the transactivation activity of Tat. EP300-mediated acetylation of Lys-50 promotes dissociation of Tat from the TAR RNA through the competitive binding to PCAF's bromodomain. In addition, the non-acetylated Tat's N-terminus can also interact with PCAF. PCAF-mediated acetylation of Lys-28 enhances Tat's binding to CCNT1. Lys-50 is deacetylated by SIRT1. Post-translationally, polyubiquitination by host MDM2 does not target Tat to degradation, but activates its transactivation function and fosters interaction with CCNT1 and TAR RNA. In terms of processing, phosphorylated by EIF2AK2 on serine and threonine residues adjacent to the basic region important for TAR RNA binding and function. Phosphorylation of Tat by EIF2AK2 is dependent on the prior activation of EIF2AK2 by dsRNA.

It localises to the host nucleus. The protein resides in the host nucleolus. It is found in the host cytoplasm. Its subcellular location is the secreted. In terms of biological role, transcriptional activator that increases RNA Pol II processivity, thereby increasing the level of full-length viral transcripts. Recognizes a hairpin structure at the 5'-LTR of the nascent viral mRNAs referred to as the transactivation responsive RNA element (TAR) and recruits the cyclin T1-CDK9 complex (P-TEFb complex) that will in turn hyperphosphorylate the RNA polymerase II to allow efficient elongation. The CDK9 component of P-TEFb and other Tat-activated kinases hyperphosphorylate the C-terminus of RNA Pol II that becomes stabilized and much more processive. Other factors such as HTATSF1/Tat-SF1, SUPT5H/SPT5, and HTATIP2 are also important for Tat's function. Besides its effect on RNA Pol II processivity, Tat induces chromatin remodeling of proviral genes by recruiting the histone acetyltransferases (HATs) CREBBP, EP300 and PCAF to the chromatin. This also contributes to the increase in proviral transcription rate, especially when the provirus integrates in transcriptionally silent region of the host genome. To ensure maximal activation of the LTR, Tat mediates nuclear translocation of NF-kappa-B by interacting with host RELA. Through its interaction with host TBP, Tat may also modulate transcription initiation. Tat can reactivate a latently infected cell by penetrating in it and transactivating its LTR promoter. In the cytoplasm, Tat is thought to act as a translational activator of HIV-1 mRNAs. Functionally, extracellular circulating Tat can be endocytosed by surrounding uninfected cells via the binding to several surface receptors such as CD26, CXCR4, heparan sulfate proteoglycans (HSPG) or LDLR. Neurons are rarely infected, but they internalize Tat via their LDLR. Through its interaction with nuclear HATs, Tat is potentially able to control the acetylation-dependent cellular gene expression. Modulates the expression of many cellular genes involved in cell survival, proliferation or in coding for cytokines or cytokine receptors. Tat plays a role in T-cell and neurons apoptosis. Tat induced neurotoxicity and apoptosis probably contribute to neuroAIDS. Circulating Tat also acts as a chemokine-like and/or growth factor-like molecule that binds to specific receptors on the surface of the cells, affecting many cellular pathways. In the vascular system, Tat binds to ITGAV/ITGB3 and ITGA5/ITGB1 integrins dimers at the surface of endothelial cells and competes with bFGF for heparin-binding sites, leading to an excess of soluble bFGF. The chain is Protein Tat from Human immunodeficiency virus type 1 group M subtype C (isolate 92BR025) (HIV-1).